Reading from the N-terminus, the 116-residue chain is Large ribosomal subunit protein bL19 (116 aa).

Belongs to the bacterial ribosomal protein bL19 family.

Its function is as follows. This protein is located at the 30S-50S ribosomal subunit interface and may play a role in the structure and function of the aminoacyl-tRNA binding site. The sequence is that of Large ribosomal subunit protein bL19 from Flavobacterium psychrophilum (strain ATCC 49511 / DSM 21280 / CIP 103535 / JIP02/86).